Reading from the N-terminus, the 314-residue chain is Olfactory receptor 51G2 (314 aa).

At 1–30 (MTLGSLGNSSSSVSATFLLSGIPGLERMHI) the chain is on the extracellular side. Residue Asn8 is glycosylated (N-linked (GlcNAc...) asparagine). Residues 31–51 (WISIPLCFMYLVSIPGNCTIL) form a helical membrane-spanning segment. Residues 52-59 (FIIKTERS) lie on the Cytoplasmic side of the membrane. Residues 60–80 (LHEPMYLFLSMLALIDLGLSL) traverse the membrane as a helical segment. Residues 81–104 (CTLPTVLGIFWVGAREISHDACFA) are Extracellular-facing. Cysteines 102 and 194 form a disulfide. The chain crosses the membrane as a helical span at residues 105–125 (QLFFIHCFSFLESSVLLSMAF). Topologically, residues 126–144 (DRFVAICHPLHYVSILTNT) are cytoplasmic. A helical transmembrane segment spans residues 145–165 (VIGRIGLVSLGRSVALIFPLP). Over 166–201 (FMLKRFPYCGSPVLSHSYCLHQEVMKLACADMKANS) the chain is Extracellular. The helical transmembrane segment at 202 to 222 (IYGMFVIVSTVGIDSLLILFS) threads the bilayer. Residues 223–242 (YALILRTVLSIASRAERFKA) are Cytoplasmic-facing. A helical membrane pass occupies residues 243 to 263 (LNTCVSHICAVLLFYTPMIGL). Residues 264–278 (SVIHRFGKQAPHLVQ) lie on the Extracellular side of the membrane. Residues 279–299 (VVMGFMYLLFPPVMNPIVYSV) form a helical membrane-spanning segment. At 300 to 314 (KTKQIRDRVTHAFCY) the chain is on the cytoplasmic side.

The protein belongs to the G-protein coupled receptor 1 family.

The protein resides in the cell membrane. Its function is as follows. Odorant receptor. The protein is Olfactory receptor 51G2 (OR51G2) of Homo sapiens (Human).